The primary structure comprises 297 residues: N-acetylmuramic acid 6-phosphate etherase (297 aa).

The SIS domain maps to Ala55 to Lys218. Glu83 serves as the catalytic Proton donor. The active site involves Glu114.

This sequence belongs to the GCKR-like family. MurNAc-6-P etherase subfamily. As to quaternary structure, homodimer.

It carries out the reaction N-acetyl-D-muramate 6-phosphate + H2O = N-acetyl-D-glucosamine 6-phosphate + (R)-lactate. It participates in amino-sugar metabolism; 1,6-anhydro-N-acetylmuramate degradation. The protein operates within amino-sugar metabolism; N-acetylmuramate degradation. Its pathway is cell wall biogenesis; peptidoglycan recycling. Specifically catalyzes the cleavage of the D-lactyl ether substituent of MurNAc 6-phosphate, producing GlcNAc 6-phosphate and D-lactate. Together with AnmK, is also required for the utilization of anhydro-N-acetylmuramic acid (anhMurNAc) either imported from the medium or derived from its own cell wall murein, and thus plays a role in cell wall recycling. This chain is N-acetylmuramic acid 6-phosphate etherase, found in Enterobacter sp. (strain 638).